Reading from the N-terminus, the 257-residue chain is Imidazole glycerol phosphate synthase subunit HisF (257 aa).

Residues aspartate 11 and aspartate 130 contribute to the active site.

It belongs to the HisA/HisF family. In terms of assembly, heterodimer of HisH and HisF.

Its subcellular location is the cytoplasm. It catalyses the reaction 5-[(5-phospho-1-deoxy-D-ribulos-1-ylimino)methylamino]-1-(5-phospho-beta-D-ribosyl)imidazole-4-carboxamide + L-glutamine = D-erythro-1-(imidazol-4-yl)glycerol 3-phosphate + 5-amino-1-(5-phospho-beta-D-ribosyl)imidazole-4-carboxamide + L-glutamate + H(+). The protein operates within amino-acid biosynthesis; L-histidine biosynthesis; L-histidine from 5-phospho-alpha-D-ribose 1-diphosphate: step 5/9. Functionally, IGPS catalyzes the conversion of PRFAR and glutamine to IGP, AICAR and glutamate. The HisF subunit catalyzes the cyclization activity that produces IGP and AICAR from PRFAR using the ammonia provided by the HisH subunit. The polypeptide is Imidazole glycerol phosphate synthase subunit HisF (Shewanella putrefaciens (strain CN-32 / ATCC BAA-453)).